The chain runs to 1233 residues: Structural maintenance of chromosomes protein 1A (1233 aa).

ATP is bound at residue 32–39; that stretch reads GPNGSGKS. 2 coiled-coil regions span residues 104–124 and 163–503; these read EYKINNKVVQLHEYSEELEKL and ELAQ…KAEI. The span at 284 to 293 shows a compositional bias: basic and acidic residues; the sequence is IKEKDSELNQ. 2 disordered regions span residues 284–308 and 348–369; these read IKEKDSELNQKRPQYIKAKENTSHK and QEFEERMEEESQSQGRDLTLEE. Residues serine 358 and serine 360 each carry the phosphoserine modification. Residues 515-629 form the SMC hinge domain; sequence VYGRLIDLCQ…DNVEDARRIA (115 aa). An N6-acetyllysine mark is found at lysine 648 and lysine 713. The stretch at 660–935 forms a coiled coil; it reads KAKARRWDEK…RHNLLQACKM (276 aa). The tract at residues 947-968 is disordered; it reads MDDISQEEGSSQGEDSVSGSQR. Low complexity predominate over residues 953 to 967; it reads EEGSSQGEDSVSGSQ. A phosphoserine mark is found at serine 957, serine 962, serine 966, and serine 970. A coiled-coil region spans residues 991–1068; the sequence is KDAQAEEEIK…FEQIKKERFD (78 aa). Lysine 1037 carries the post-translational modification N6-acetyllysine.

This sequence belongs to the SMC family. SMC1 subfamily. As to quaternary structure, forms a heterodimer with SMC3 in cohesin complexes. Cohesin complexes are composed of the SMC1 (SMC1A or meiosis-specific SMC1B) and SMC3 heterodimer attached via their SMC hinge domain, RAD21 which link them, and one STAG protein (STAG1, STAG2 or meiosis-specific STAG3), which interacts with RAD21. In germ cell cohesin complexes, SMC1A is mutually exclusive with SMC1B. Found in a complex with CDCA5, SMC3 and RAD21, PDS5A/SCC-112 and PDS5B/APRIN. Interacts with NDC80, SYCP2, STAG3, BRCA1 and BRAT1. The cohesin complex interacts with the cohesin loading complex subunits NIPBL/Scc2 (via HEAT repeats) and MAU2/Scc4. NIPBL directly contacts all members of the complex, RAD21, SMC1A/B, SMC3 and STAG1. Interacts with RPGR. Found in a complex containing POLE and SMC3. Post-translationally, phosphorylated upon ionizing radiation or DNA methylation. Phosphorylation of Ser-957 and Ser-966 activates it and is required for S-phase checkpoint activation. Ubiquitinated by the DCX(DCAF15) complex, leading to its degradation.

The protein localises to the nucleus. It is found in the chromosome. Its subcellular location is the centromere. Its function is as follows. Involved in chromosome cohesion during cell cycle and in DNA repair. Involved in DNA repair via its interaction with BRCA1 and its related phosphorylation by ATM, and works as a downstream effector in the ATM/NBS1 branch of S-phase checkpoint. Central component of cohesin complex. The cohesin complex is required for the cohesion of sister chromatids after DNA replication. The cohesin complex apparently forms a large proteinaceous ring within which sister chromatids can be trapped. At anaphase, the complex is cleaved and dissociates from chromatin, allowing sister chromatids to segregate. The cohesin complex may also play a role in spindle pole assembly during mitosis. Involved in DNA repair via its interaction with BRCA1 and its related phosphorylation by ATM, or via its phosphorylation by ATR. Works as a downstream effector both in the ATM/NBS1 branch and in the ATR/MSH2 branch of S-phase checkpoint. This chain is Structural maintenance of chromosomes protein 1A (SMC1A), found in Bos taurus (Bovine).